A 310-amino-acid chain; its full sequence is NADH-cytochrome b5 reductase 1 (310 aa).

The helical transmembrane segment at 30–50 (WVPFAVALAAGFVAWKLSVGG) threads the bilayer. An FAD-binding FR-type domain is found at 61–166 (NEFQNFVLKE…RGPKGAMVYT (106 aa)). FAD-binding positions include 146–160 (TTLKVGDTMKVRGPK) and 172–209 (HIGMIAGGTGITPMLQIIKAIIRNRPRNGGNDTTQVDL).

It belongs to the flavoprotein pyridine nucleotide cytochrome reductase family. In terms of assembly, monomer. Component of the 2-(3-amino-3-carboxypropyl)histidine synthase complex composed of dph1, dph2, dph3 and a NADH-dependent reductase, predominantly cbr1. Requires FAD as cofactor.

The protein resides in the mitochondrion outer membrane. The catalysed reaction is 2 Fe(III)-[cytochrome b5] + NADH = 2 Fe(II)-[cytochrome b5] + NAD(+) + H(+). It catalyses the reaction 2 Fe(3+)-[Dph3] + NADH = 2 Fe(2+)-[Dph3] + NAD(+) + H(+). It functions in the pathway protein modification; peptidyl-diphthamide biosynthesis. Its function is as follows. NADH-dependent reductase for dph3 and cytochrome b5. Required for the first step of diphthamide biosynthesis, a post-translational modification of histidine which occurs in elongation factor 2. Dph1 and dph2 transfer a 3-amino-3-carboxypropyl (ACP) group from S-adenosyl-L-methionine (SAM) to a histidine residue, the reaction is assisted by a reduction system comprising dph3 and a NADH-dependent reductase, predominantly cbr1. By reducing dph3, also involved in the formation of the tRNA wobble base modification mcm5s 2U (5-methoxycarbonylmethyl-2-thiouridine), mediated by the elongator complex. The cytochrome b5/NADH cytochrome b5 reductase electron transfer system supports the catalytic activity of several sterol biosynthetic enzymes. The protein is NADH-cytochrome b5 reductase 1 (cbr1) of Emericella nidulans (strain FGSC A4 / ATCC 38163 / CBS 112.46 / NRRL 194 / M139) (Aspergillus nidulans).